A 225-amino-acid polypeptide reads, in one-letter code: UPF0758 protein XC_3944 (225 aa).

The MPN domain occupies 102–224; sequence ALSDPSSVGR…PVSLAERGWV (123 aa). Residues histidine 173, histidine 175, and aspartate 186 each contribute to the Zn(2+) site. A JAMM motif motif is present at residues 173–186; sequence HNHPSGNPEPSEAD.

It belongs to the UPF0758 family.

This Xanthomonas campestris pv. campestris (strain 8004) protein is UPF0758 protein XC_3944.